We begin with the raw amino-acid sequence, 186 residues long: Guanylate kinase (186 aa).

Residues glycine 5–glycine 183 enclose the Guanylate kinase-like domain. Glycine 12–glycine 19 is an ATP binding site.

It belongs to the guanylate kinase family.

The protein resides in the cytoplasm. The enzyme catalyses GMP + ATP = GDP + ADP. Essential for recycling GMP and indirectly, cGMP. This chain is Guanylate kinase, found in Prochlorococcus marinus (strain NATL2A).